Here is a 717-residue protein sequence, read N- to C-terminus: Polyribonucleotide nucleotidyltransferase (717 aa).

Mg(2+)-binding residues include D486 and D492. Residues 553–612 enclose the KH domain; sequence PRMITVKINPEKIRDVIGKGGSTIQALTKETGCTIDIQEDGTITIASTSSEGMAEAKRRI. Positions 622 to 690 constitute an S1 motif domain; it reads GKIYSGTVLK…EKGRMRLSIK (69 aa). Residues 690–717 are disordered; it reads KAAKAEEGDVPATAPQAPGAGDATSQQQ.

It belongs to the polyribonucleotide nucleotidyltransferase family. The cofactor is Mg(2+).

The protein resides in the cytoplasm. The catalysed reaction is RNA(n+1) + phosphate = RNA(n) + a ribonucleoside 5'-diphosphate. In terms of biological role, involved in mRNA degradation. Catalyzes the phosphorolysis of single-stranded polyribonucleotides processively in the 3'- to 5'-direction. The polypeptide is Polyribonucleotide nucleotidyltransferase (Ralstonia nicotianae (strain ATCC BAA-1114 / GMI1000) (Ralstonia solanacearum)).